Consider the following 181-residue polypeptide: ATP-dependent protease subunit HslV (181 aa).

Residue T11 is part of the active site. Na(+) is bound by residues A166, C169, and T172.

It belongs to the peptidase T1B family. HslV subfamily. A double ring-shaped homohexamer of HslV is capped on each side by a ring-shaped HslU homohexamer. The assembly of the HslU/HslV complex is dependent on binding of ATP.

It localises to the cytoplasm. The catalysed reaction is ATP-dependent cleavage of peptide bonds with broad specificity.. Its activity is regulated as follows. Allosterically activated by HslU binding. Functionally, protease subunit of a proteasome-like degradation complex believed to be a general protein degrading machinery. In Chlorobaculum tepidum (strain ATCC 49652 / DSM 12025 / NBRC 103806 / TLS) (Chlorobium tepidum), this protein is ATP-dependent protease subunit HslV.